Reading from the N-terminus, the 1169-residue chain is MEPRESGKAPVTFDDITVYLLQEEWVLLSQQQKELCGSNKLVAPLGPTVANPELFRKFGRGPEPWLGSVQGQRSLLEHHPGKKQMGYMGEMEVQGPTRESGQSLPPQKKAYLSHLSTGSGHIEGDWAGRNRKLLKPRSIQKSWFVQFPWLIMNEEQTALFCSACREYPSIRDKRSRLIEGYTGPFKVETLKYHAKSKAHMFCVNALAARDPIWAARFRSIRDPPGDVLASPEPLFTADCPIFYPPGPLGGFDSMAELLPSSRAELEDPGGDGAIPAMYLDCISDLRQKEITDGIHSSSDINILYNDAVESCIQDPSAEGLSEEVPVVFEELPVVFEDVAVYFTREEWGMLDKRQKELYRDVMRMNYELLASLGPAAAKPDLISKLERRAAPWIKDPNGPKWGKGRPPGNKKMVAVREADTQASAADSALLPGSPVEARASCCSSSICEEGDGPRRIKRTYRPRSIQRSWFGQFPWLVIDPKETKLFCSACIERPNLHDKSSRLVRGYTGPFKVETLKYHEVSKAHRLCVNTVEIKEDTPHTALVPEISSDLMANMEHFFNAAYSIAYHSRPLNDFEKILQLLQSTGTVILGKYRNRTACTQFIKYISETLKREILEDVRNSPCVSVLLDSSTDASEQACVGIYIRYFKQMEVKESYITLAPLYSETADGYFETIVSALDELDIPFRKPGWVVGLGTDGSAMLSCRGGLVEKFQEVIPQLLPVHCVAHRLHLAVVDACGSIDLVKKCDRHIRTVFKFYQSSNKRLNELQEGAAPLEQEIIRLKDLNAVRWVASRRRTLHALLVSWPALARHLQRVAEAGGQIGHRAKGMLKLMRGFHFVKFCHFLLDFLSIYRPLSEVCQKEIVLITEVNATLGRAYVALESLRHQAGPKEEEFNASFKDGRLHGICLDKLEVAEQRFQADRERTVLTGIEYLQQRFDADRPPQLKNMEVFDTMAWPSGIELASFGNDDILNLARYFECSLPTGYSEEALLEEWLGLKTIAQHLPFSMLCKNALAQHCRFPLLSKLMAVVVCVPISTSCCERGFKAMNRIRTDERTKLSNEVLNMLMMTAVNGVAVTEYDPQPAIQHWYLTSSGRRFSHVYTCAQVPARSPASARLRKEEMGALYVEEPRTQKPPILPSREAAEVLKDCIMEPPERLLYPHTSQEAPGMS.

The KRAB 1 domain maps to 11 to 77 (VTFDDITVYL…SVQGQRSLLE (67 aa)). The TTF-type 1 zinc-finger motif lies at 135–218 (KPRSIQKSWF…RDPIWAARFR (84 aa)). Residues 333-404 (VVFEDVAVYF…DPNGPKWGKG (72 aa)) form the KRAB 2 domain. The segment at 461-544 (RPRSIQRSWF…KEDTPHTALV (84 aa)) adopts a TTF-type 2 zinc-finger fold.

The protein resides in the nucleus. May be involved in transcriptional regulation. This Homo sapiens (Human) protein is Zinc finger protein 862 (ZNF862).